A 43-amino-acid chain; its full sequence is Cytochrome b559 subunit beta (43 aa).

Residues 18-34 (WLAVHTLAIPTVFFLGA) form a helical membrane-spanning segment. His22 contacts heme.

It belongs to the PsbE/PsbF family. In terms of assembly, heterodimer of an alpha subunit and a beta subunit. PSII is composed of 1 copy each of membrane proteins PsbA, PsbB, PsbC, PsbD, PsbE, PsbF, PsbH, PsbI, PsbJ, PsbK, PsbL, PsbM, PsbT, PsbX, PsbY, PsbZ, Psb30/Ycf12, peripheral proteins PsbO, CyanoQ (PsbQ), PsbU, PsbV and a large number of cofactors. It forms dimeric complexes. Heme b serves as cofactor.

Its subcellular location is the cellular thylakoid membrane. This b-type cytochrome is tightly associated with the reaction center of photosystem II (PSII). PSII is a light-driven water:plastoquinone oxidoreductase that uses light energy to abstract electrons from H(2)O, generating O(2) and a proton gradient subsequently used for ATP formation. It consists of a core antenna complex that captures photons, and an electron transfer chain that converts photonic excitation into a charge separation. The protein is Cytochrome b559 subunit beta of Synechococcus sp. (strain JA-2-3B'a(2-13)) (Cyanobacteria bacterium Yellowstone B-Prime).